Reading from the N-terminus, the 223-residue chain is Golgi SNAP receptor complex member 1 (223 aa).

Residue serine 2 is modified to N-acetylserine. Over 2-204 (SSQPSFVTIR…MKINTRRKKN (203 aa)) the chain is Cytoplasmic. At serine 164 the chain carries Phosphoserine. Residues 205–222 (AFVLATITTLCILFLFFT) form a helical; Anchor for type IV membrane protein membrane-spanning segment. Residue tryptophan 223 is a topological domain, vesicular.

This sequence belongs to the GOSR1 family. In terms of assembly, component of several multiprotein Golgi SNARE complexes. Identified in a Golgi SNARE complex consisting of t-SNARES SED5, YKT6, and the v-SNARE SFT1. Interacts with BET1. Interacts with BOS1. Interacts with SEC22. Interacts with PEP12. Interacts with self.

The protein localises to the golgi apparatus membrane. Involved in transport from the ER to the Golgi apparatus as well as in intra-Golgi transport. It belongs to a super-family of proteins called t-SNAREs or soluble NSF (N-ethylmaleimide-sensitive factor) attachment protein receptor. Rescues alpha-factor maturation defects. In Saccharomyces cerevisiae (strain ATCC 204508 / S288c) (Baker's yeast), this protein is Golgi SNAP receptor complex member 1 (GOS1).